Reading from the N-terminus, the 417-residue chain is MTTNLNGTFAAVQAASRELALLSDDTINQILNAVADATIAETSFILSENEKDLARMDKSNPKYDRLKLTEERLKGIAADTRNVATLPSPLGRILKETSRPNGMKLTKVSVPFGVIGIIYEARPNVSFDVFSLCLKSGNACILKGGSDADDSNRAIISVIHKVLEKFHVNPHIVELLPADREATAALLNATGYVDLIIPRGSSNLINFVRENARIPVIETGAGICHTYFDEFGDTRKGADIIHNAKTRRVSVCNALDCTIIHEKRLGDLPALCDQLKESKVTIYADTQAYQALEGYYPAELLQPATPESFGTEFLDYKMAVKTVKSFEDALGHIQENSSRHSECIVTENKERATLFTKIVDAACVYTNVSTAFTDGAQFGLGAEIGISTQKLHARGPMGLEEITSYKWVIEGDGQTRW.

The protein belongs to the gamma-glutamyl phosphate reductase family.

The protein resides in the cytoplasm. The enzyme catalyses L-glutamate 5-semialdehyde + phosphate + NADP(+) = L-glutamyl 5-phosphate + NADPH + H(+). Its pathway is amino-acid biosynthesis; L-proline biosynthesis; L-glutamate 5-semialdehyde from L-glutamate: step 2/2. Catalyzes the NADPH-dependent reduction of L-glutamate 5-phosphate into L-glutamate 5-semialdehyde and phosphate. The product spontaneously undergoes cyclization to form 1-pyrroline-5-carboxylate. This chain is Gamma-glutamyl phosphate reductase, found in Bacteroides thetaiotaomicron (strain ATCC 29148 / DSM 2079 / JCM 5827 / CCUG 10774 / NCTC 10582 / VPI-5482 / E50).